The chain runs to 334 residues: UPF0104 membrane protein MTH_378 (334 aa).

Transmembrane regions (helical) follow at residues 7–27 (FYFFALSILLILALIIWMGPS), 33–53 (VYMADWMIIAIALLIHMGVLA), 120–140 (FFDLGIGGGLLLLAAVMVPVI), 142–162 (VIALFGAILSVLITYLIYLVN), 218–238 (VIFILSLLSWLMECLRLYLVF), 247–267 (FSAVIIIFLLANLVGILSALP), 277–297 (MAGLFVVFGVPGFLAGSIALV), and 300–320 (IISFWMVTALGAIFSSCYAGE).

The protein belongs to the UPF0104 family.

It localises to the cell membrane. The chain is UPF0104 membrane protein MTH_378 from Methanothermobacter thermautotrophicus (strain ATCC 29096 / DSM 1053 / JCM 10044 / NBRC 100330 / Delta H) (Methanobacterium thermoautotrophicum).